The chain runs to 442 residues: Radical S-adenosyl methionine domain-containing protein 1, mitochondrial (442 aa).

A mitochondrion-targeting transit peptide spans 1–22 (MALPRSQARGWVKAAKMAQRRR). The interval 1–37 (MALPRSQARGWVKAAKMAQRRRPADDTGGPQSPAPGS) is disordered. The Radical SAM core domain occupies 34-270 (APGSQRAALY…RAVLREAGFR (237 aa)). Position 43 (Tyr43) interacts with S-adenosyl-L-methionine. Positions 49, 53, and 56 each coordinate [4Fe-4S] cluster. S-adenosyl-L-methionine-binding positions include Gly98, 99-100 (GT), Glu131, Gln158, Arg170, and Asp195.

Belongs to the anaerobic coproporphyrinogen-III oxidase family. HemW subfamily. [4Fe-4S] cluster serves as cofactor.

It localises to the mitochondrion. May be a heme chaperone, appears to bind heme. Homologous bacterial proteins do not have oxygen-independent coproporphyrinogen-III oxidase activity. Binds 1 [4Fe-4S] cluster. The cluster is coordinated with 3 cysteines and an exchangeable S-adenosyl-L-methionine. The sequence is that of Radical S-adenosyl methionine domain-containing protein 1, mitochondrial (RSAD1) from Bos taurus (Bovine).